Here is a 362-residue protein sequence, read N- to C-terminus: Peptide chain release factor 1 (362 aa).

Gln237 is modified (N5-methylglutamine).

It belongs to the prokaryotic/mitochondrial release factor family. Post-translationally, methylated by PrmC. Methylation increases the termination efficiency of RF1.

The protein localises to the cytoplasm. In terms of biological role, peptide chain release factor 1 directs the termination of translation in response to the peptide chain termination codons UAG and UAA. The protein is Peptide chain release factor 1 of Vibrio parahaemolyticus serotype O3:K6 (strain RIMD 2210633).